Reading from the N-terminus, the 284-residue chain is Nucleotide-binding protein NMC0691 (284 aa).

Residue 8–15 (GLSGSGKS) participates in ATP binding. 58-61 (DVRS) contacts GTP.

This sequence belongs to the RapZ-like family.

In terms of biological role, displays ATPase and GTPase activities. The polypeptide is Nucleotide-binding protein NMC0691 (Neisseria meningitidis serogroup C / serotype 2a (strain ATCC 700532 / DSM 15464 / FAM18)).